The following is a 239-amino-acid chain: Large ribosomal subunit protein uL2 (239 aa).

The tract at residues 202 to 239 is disordered; the sequence is HGGGSHQHVGRPSTVARNTPPGRKVGHIAARRTGRRKG. Residues 225–239 show a composition bias toward basic residues; it reads KVGHIAARRTGRRKG.

It belongs to the universal ribosomal protein uL2 family. Part of the 50S ribosomal subunit. Forms a bridge to the 30S subunit in the 70S ribosome.

Its function is as follows. One of the primary rRNA binding proteins. Required for association of the 30S and 50S subunits to form the 70S ribosome, for tRNA binding and peptide bond formation. It has been suggested to have peptidyltransferase activity; this is somewhat controversial. Makes several contacts with the 16S rRNA in the 70S ribosome. The sequence is that of Large ribosomal subunit protein uL2 from Desulfurococcus amylolyticus (strain DSM 18924 / JCM 16383 / VKM B-2413 / 1221n) (Desulfurococcus kamchatkensis).